A 291-amino-acid chain; its full sequence is Glycolipid transfer protein domain-containing protein 2 (291 aa).

Asparagine 276 carries N-linked (GlcNAc...) asparagine glycosylation.

It belongs to the GLTP family.

This is Glycolipid transfer protein domain-containing protein 2 (GLTPD2) from Homo sapiens (Human).